Here is a 2763-residue protein sequence, read N- to C-terminus: Large tegument protein deneddylase (2763 aa).

The interval 1–247 (MDIIPPIAVT…CDTYFTDEQY (247 aa)) is deubiquitination activity. The Peptidase C76 domain occupies 12–237 (AGVGSRNQFD…SSAVTLIYGS (226 aa)). Residues Cys-32, Asp-168, and His-170 contribute to the active site. An interaction with inner tegument protein region spans residues 495–523 (LELFINLTILRLTGFVVENGTRTHHGATS). Tandem repeats lie at residues 2455-2457 (PVQ), 2458-2460 (PVQ), 2461-2463 (PAQ), 2464-2466 (PVQ), 2467-2469 (PAQ), 2470-2472 (PAQ), 2473-2475 (PVQ), and 2476-2478 (PAQ). Residues 2455–2478 (PVQPVQPAQPVQPAQPAQPVQPAQ) are 8 X 3 AA repeats of P-A/V-Q. The disordered stretch occupies residues 2630–2651 (NYKTRQPSPNFPRDVHTWGVSS).

It belongs to the herpesviridae large tegument protein family. In terms of assembly, interacts with host CUL1 and CUL4A; these interactions inhibit the E3 ligase activity of cullins. Interacts with inner tegument protein. Interacts with capsid vertex specific component CVC2. Interacts with the major capsid protein/MCP.

Its subcellular location is the virion tegument. It is found in the host cytoplasm. It localises to the host nucleus. The catalysed reaction is Thiol-dependent hydrolysis of ester, thioester, amide, peptide and isopeptide bonds formed by the C-terminal Gly of ubiquitin (a 76-residue protein attached to proteins as an intracellular targeting signal).. Its function is as follows. Large tegument protein that plays multiple roles in the viral cycle. During viral entry, remains associated with the capsid while most of the tegument is detached and participates in the capsid transport toward the host nucleus. Plays a role in the routing of the capsid at the nuclear pore complex and subsequent uncoating. Within the host nucleus, acts as a deneddylase and promotes the degradation of nuclear CRLs (cullin-RING ubiquitin ligases) and thereby stabilizes nuclear CRL substrates, while cytoplasmic CRLs remain unaffected. These modifications prevent host cell cycle S-phase progression and create a favorable environment allowing efficient viral genome replication. Participates later in the secondary envelopment of capsids. Indeed, plays a linker role for the association of the outer viral tegument to the capsids together with the inner tegument protein. This is Large tegument protein deneddylase from Varicella-zoster virus (strain Oka vaccine) (HHV-3).